Reading from the N-terminus, the 125-residue chain is DNA-directed RNA polymerases I and III subunit RPAC2 (125 aa).

This sequence belongs to the archaeal Rpo11/eukaryotic RPB11/RPC19 RNA polymerase subunit family. As to quaternary structure, component of the RNA polymerase I (Pol I) and RNA polymerase III (Pol III) complexes consisting of 14 and 17 subunits, respectively.

It is found in the nucleus. In terms of biological role, DNA-dependent RNA polymerase catalyzes the transcription of DNA into RNA using the four ribonucleoside triphosphates as substrates. Common core component of RNA polymerases I and III which synthesize ribosomal RNA precursors and small RNAs, such as 5S rRNA and tRNAs, respectively. In Schizosaccharomyces pombe (strain 972 / ATCC 24843) (Fission yeast), this protein is DNA-directed RNA polymerases I and III subunit RPAC2 (rpc19).